We begin with the raw amino-acid sequence, 558 residues long: Formate--tetrahydrofolate ligase (558 aa).

66–73 serves as a coordination point for ATP; that stretch reads TPAGEGKT.

Belongs to the formate--tetrahydrofolate ligase family.

It carries out the reaction (6S)-5,6,7,8-tetrahydrofolate + formate + ATP = (6R)-10-formyltetrahydrofolate + ADP + phosphate. Its pathway is one-carbon metabolism; tetrahydrofolate interconversion. This chain is Formate--tetrahydrofolate ligase, found in Neisseria meningitidis serogroup A / serotype 4A (strain DSM 15465 / Z2491).